A 177-amino-acid polypeptide reads, in one-letter code: Dual-action ribosomal maturation protein DarP (177 aa).

This sequence belongs to the DarP family.

The protein resides in the cytoplasm. Functionally, member of a network of 50S ribosomal subunit biogenesis factors which assembles along the 30S-50S interface, preventing incorrect 23S rRNA structures from forming. Promotes peptidyl transferase center (PTC) maturation. In Histophilus somni (strain 129Pt) (Haemophilus somnus), this protein is Dual-action ribosomal maturation protein DarP.